The primary structure comprises 326 residues: MAFTPFPPRQPTASARLPLTLMTLDDWALATITGADSEKYMQGQVTADVSQMTEDQHLLAAHCDAKGKMWSNLRLFRDGDGFAWIERRSVREPQLTELKKYAVFSKVTIAPDDERVLLGVAGFQARAALANLFSELPSREKQVVKEGATTLLWFEHPAERFLIVTDEATANMLTDKLRGEAELNNSQQWLALNIEAGFPVIDAANSGQFIPQATNLQALGGISFKKGCYTGQEMVARAKFRGANKRALWLLKGSASRLPEAGEDLELKMGENWRRTGTVLATVKLEDGQVVVQVVMNNDMEPDSIFRVRDDANTLRIEPLPYSLEE.

Residues tryptophan 27 and tryptophan 189 each contribute to the folate site.

This sequence belongs to the tRNA-modifying YgfZ family.

The protein resides in the cytoplasm. Functionally, folate-binding protein involved in regulating the level of ATP-DnaA and in the modification of some tRNAs. It is probably a key factor in regulatory networks that act via tRNA modification, such as initiation of chromosomal replication. This is tRNA-modifying protein YgfZ from Escherichia coli O6:H1 (strain CFT073 / ATCC 700928 / UPEC).